The primary structure comprises 351 residues: Peroxidase C1B (351 aa).

A signal peptide spans 1–28 (MHSPSSTSFTWILITLGCLAFYASLSDA). Disulfide bonds link Cys-39–Cys-119, Cys-72–Cys-77, Cys-125–Cys-329, and Cys-205–Cys-237. A glycan (N-linked (GlcNAc...) asparagine) is linked at Asn-41. The active-site Proton acceptor is the His-70. The Ca(2+) site is built by Asp-71, Val-74, Gly-76, Asp-78, and Ser-80. A glycan (N-linked (GlcNAc...) asparagine) is linked at Asn-85. A substrate-binding site is contributed by Pro-167. His-198 is a binding site for heme b. A Ca(2+)-binding site is contributed by Thr-199. 3 N-linked (GlcNAc...) asparagine glycosylation sites follow: Asn-214, Asn-226, and Asn-242. Ca(2+) is bound by residues Asp-250, Thr-253, and Asp-258. Asn-283 is a glycosylation site (N-linked (GlcNAc...) asparagine).

This sequence belongs to the peroxidase family. Classical plant (class III) peroxidase subfamily. The cofactor is Ca(2+). Heme b serves as cofactor.

Its subcellular location is the secreted. The protein resides in the vacuole. The catalysed reaction is 2 a phenolic donor + H2O2 = 2 a phenolic radical donor + 2 H2O. Removal of H(2)O(2), oxidation of toxic reductants, biosynthesis and degradation of lignin, suberization, auxin catabolism, response to environmental stresses such as wounding, pathogen attack and oxidative stress. These functions might be dependent on each isozyme/isoform in each plant tissue. The polypeptide is Peroxidase C1B (PRXC1B) (Armoracia rusticana (Horseradish)).